A 599-amino-acid chain; its full sequence is Elongation factor 4 (599 aa).

A tr-type G domain is found at 5–187 (SHIRNFSIIA…ALVNGIPAPV (183 aa)). GTP is bound by residues 17–22 (DHGKST) and 134–137 (NKMD).

It belongs to the TRAFAC class translation factor GTPase superfamily. Classic translation factor GTPase family. LepA subfamily.

It localises to the cell inner membrane. It carries out the reaction GTP + H2O = GDP + phosphate + H(+). Functionally, required for accurate and efficient protein synthesis under certain stress conditions. May act as a fidelity factor of the translation reaction, by catalyzing a one-codon backward translocation of tRNAs on improperly translocated ribosomes. Back-translocation proceeds from a post-translocation (POST) complex to a pre-translocation (PRE) complex, thus giving elongation factor G a second chance to translocate the tRNAs correctly. Binds to ribosomes in a GTP-dependent manner. This chain is Elongation factor 4, found in Teredinibacter turnerae (strain ATCC 39867 / T7901).